A 207-amino-acid chain; its full sequence is Serotonin N-acetyltransferase (207 aa).

The interval 1 to 28 is disordered; the sequence is MSMQSTHPPKPEAPRLPPGIPESPSCQR. T31 is subject to Phosphothreonine; by PKA. The region spanning 35 to 202 is the N-acetyltransferase domain; the sequence is SEFRCLTPED…CSLRDHPFLR (168 aa). Substrate is bound at residue L124. Acetyl-CoA is bound by residues 124–126 and 132–137; these read LAV and QQGRGP. Residue M159 coordinates substrate. 168–170 provides a ligand contact to acetyl-CoA; it reads YER. S205 carries the phosphoserine modification.

Belongs to the acetyltransferase family. AANAT subfamily. Monomer. Interacts with several 14-3-3 proteins, including YWHAB, YWHAE, YWHAG and YWHAZ, preferentially when phosphorylated at Thr-31. Phosphorylation on Ser-205 also allows binding to YWHAZ, but with lower affinity. The interaction with YWHAZ considerably increases affinity for arylalkylamines and acetyl-CoA and protects the enzyme from dephosphorylation and proteasomal degradation. It may also prevent thiol-dependent inactivation. Post-translationally, cAMP-dependent phosphorylation on both N-terminal Thr-31 and C-terminal Ser-205 regulates AANAT activity by promoting interaction with 14-3-3 proteins.

Its subcellular location is the cytoplasm. It catalyses the reaction a 2-arylethylamine + acetyl-CoA = an N-acetyl-2-arylethylamine + CoA + H(+). It participates in aromatic compound metabolism; melatonin biosynthesis; melatonin from serotonin: step 1/2. Its function is as follows. Controls the night/day rhythm of melatonin production in the pineal gland. Catalyzes the N-acetylation of serotonin into N-acetylserotonin, the penultimate step in the synthesis of melatonin. This is Serotonin N-acetyltransferase (AANAT) from Pan troglodytes (Chimpanzee).